Here is a 539-residue protein sequence, read N- to C-terminus: RING finger protein 37 (539 aa).

Positions Pro226–Leu249 are disordered. The span at Gln239–Leu249 shows a compositional bias: polar residues. The U-box domain maps to Asp258–Ser338. Disordered regions lie at residues Leu359–Ala399 and Gly456–Pro479. Low complexity predominate over residues His374–Ser395. An RING-type zinc finger spans residues Cys481–Arg526.

Interacts with UBE2L3. Interacts with VCP. Expressed in testis and placenta.

The protein resides in the nucleus. The enzyme catalyses S-ubiquitinyl-[E2 ubiquitin-conjugating enzyme]-L-cysteine + [acceptor protein]-L-lysine = [E2 ubiquitin-conjugating enzyme]-L-cysteine + N(6)-ubiquitinyl-[acceptor protein]-L-lysine.. It participates in protein modification; protein ubiquitination. May have a ubiquitin-protein ligase activity acting as an E3 ubiquitin-protein ligase or as a ubiquitin-ubiquitin ligase promoting elongation of ubiquitin chains on substrates. In Mus musculus (Mouse), this protein is RING finger protein 37 (Ubox5).